Consider the following 288-residue polypeptide: Solute carrier family 25 member 47-B (288 aa).

Solcar repeat units follow at residues 1 to 83, 99 to 191, and 199 to 286; these read MHLA…ILQF, AHIF…ICEI, and PGWP…VVRL. A run of 6 helical transmembrane segments spans residues 3–23, 58–75, 101–121, 175–195, 199–219, and 257–277; these read LADF…GYPL, GMSM…LVFG, IFLA…PADI, GPSF…LTTE, PGWP…WAVG, and VLFR…MSVF.

This sequence belongs to the mitochondrial carrier (TC 2.A.29) family.

It localises to the mitochondrion inner membrane. The sequence is that of Solute carrier family 25 member 47-B (slc25a47b) from Danio rerio (Zebrafish).